We begin with the raw amino-acid sequence, 398 residues long: Streptopain (398 aa).

The N-terminal stretch at 1-27 (MNKKKLGVRLLSLLALGGFVLANPVFA) is a signal peptide. The propeptide occupies 28-145 (DQNFARNEKE…TTYAGTAEIK (118 aa)). The Nucleophile role is filled by Cys192. Cysteine methyl disulfide; in zymogen form is present on Cys192. A protein-binding residues include Ser282 and Gly339. Residue His340 is the Proton acceptor of the active site. The C-terminal active site loop stretch occupies residues 368-390 (RLDALNPSALGTGGGAGGFNGYQ).

Belongs to the peptidase C10 family. In terms of assembly, monomer. Post-translationally, the mature protease is derived from the precursor sequence by cleavage, either in cis via an autocatalytic mechanism, or in trans by mature SpeB or host proteases (trypsin, plasmin or subtilisin). Maturation can involve a number of protein cleavage intermediates. Mature SpeB probably plays the most important role in protein maturation in physiological conditions. In terms of processing, methylthiolation at Cys-192 of the inactive zymogen form is probably involved in the mechanism of secretion of the proteinase into the culture fluid.

It localises to the secreted. The protein localises to the host extracellular space. It is found in the host cytoplasm. The enzyme catalyses Preferential cleavage with hydrophobic residues at P2, P1 and P1'.. Synthesized as an inactive zymogen to protect the intracellular components of the bacteria from proteolytic activity during protein production. Once secreted into the extracellular milieu, cleaved into the active protease: maturation can be mediated in cis by autocatalytic cleavage, or in trans by mature SpeB or host proteases. Protease activity is strongly inhibited by zinc and copper, which prevent its maturation into an active protease: inhibition by metal ions may be required to prevent proteolysis of streptococcal proteins. Functionally, cysteine protease that acts as a key streptococcal virulence factor by cleaving host proteins involved in immune response. Triggers inflammation by mediating cleavage of host proteins, which can both promote host pathogenesis by triggering sterile inflammation and/or restrict streptococcal infection, depending on host immune statue and infection site. Cleaves host gasdermin-A (GSDMA) in epithelial cells, promoting GSDMA activation and formation of gasdermin pores, triggering pyroptosis. Pyroptosis triggers the elimination of the infected skin cell, depriving the pathogen of its protective niche, while inducing an inflammatory response. This ultimately prevents bacterial penetration of the epithelial barrier and a subsequent systemic dissemination of the pathogen. Also mediates cleavage of the cytokine precursor interleukin-1 beta (IL1B) to its mature form, resulting in inflammation and septic shock. SpeB-mediated maturation of IL1B plays a dual role depending on infection site: while IL1B inflammatory response prevents bacterial growth during invasive skin infections, it promotes streptococcal infection of the nasopharynx by disrupting colonization resistance mediated by the microbiota. Inhibits host autophagy be catalyzing cleavage and inactivation of key autophagy factors, such as CALCOCO2, NBR1 and SQSTM1. Cleaves and inhibits a number of complement factors, such as C2, C3-beta chain of C3, C4, C5 or SERPING1, thereby promoting evasion of host immunity. May also impair adaptive immunity by catalyzing cleavage and degradation of host immunoglobulins to promote immune system evasion; the relevance of this activity is however unsure in vivo. Catalyzes maturation and release of the peptide hormone bradykinin from the precursor Kininogen-1 (KNG1) to produce hypotension during septic shock. Also involved in bacterial translocation across the host epithelial barrier by mediating cleavage and degradation of host epithelial junction proteins, such as CDH1 and OCLN. Additionally, has been involved in degradation of fibronectin and vitronectin, two host extracellular matrix proteins involved in tissue integrity. Also able to catalyze cleavage and degradation of streptococcal proteins, such as C5a peptidase, EndoS or SmeZ. Degradation of streptococcal proteins is however strictly regulated to preserve integrity of other virulence factors. The protein is Streptopain of Streptococcus pyogenes serotype M1.